Consider the following 148-residue polypeptide: Cofilin/actin-depolymerizing factor homolog (148 aa).

An ADF-H domain is found at 4–143 (GVTVSDVCKT…SREAVEEKLR (140 aa)). A Nuclear localization signal motif is present at residues 19–23 (KKDKK).

It belongs to the actin-binding proteins ADF family. Phosphorylated in vitro by protein kinase LIMK1. Phosphorylation is required for inactivation of tsr and for cell proliferation and axon growth. Phosphorylation is negatively regulated by the panthothenate kinase fbl which catalyzes the first step in the conversion of panthothenic acid to coenzyme A. Post-translationally, dephosphorylated by protein phosphatase ssh which activates tsr.

It is found in the cytoplasm. The protein localises to the cytoskeleton. It localises to the nucleus matrix. Its function is as follows. Exhibits F-actin depolymerizing activity and regulates actin cytoskeleton dynamics. Required for cytokinesis in both mitotic and meiotic cells and for aster migration and separation. Promotes cell motility during ovary development and oogenesis. During larval development, required for the cell rearrangement needed for formation of terminal filaments which are stacks of somatic cells that are important for the initiation of ovarioles. Also required for border cell migration during oogenesis. During border cell migration, required for actin turnover and lamellipodial protrusion. Required for the establishment of planar cell polarity (PCP) where cells adopt a uniform orientation within the plane of an epithelium. During establishment of PCP, required for the redistribution of the PCP core proteins fz and stan/fmi to the proximodistal cell boundary. During pupal development, required for elongation of the retinal cell body and for rhabdomere morphogenesis. Required for mushroom body neuroblast proliferation and axon growth. Plays a role in the positive regulation of protein secretion. Plays a role in the regulation of nuclear localization of actin. Required for the maintenance of epithelial integrity by controlling cell junctions and is also necessary for cell survival and tissue growth through regulation of JNK and yki signaling. The sequence is that of Cofilin/actin-depolymerizing factor homolog from Drosophila melanogaster (Fruit fly).